The chain runs to 463 residues: MNLQWQKYPENASKLFKLTVPIFISQLSASGMGLADIVMAGLVSDDDVSAIAVSNSIYFPLFLFVLGVLNAITPTVSYLNGANQRNLIAHQIRQGFWLVWAFVIPLIVVFLNSHWILDYMNTPAVFAQKSQDYLAIMAIGIVPALLTVNLRCMNDGLANPKPAMRITFIGLLCNIPLNYIFIFGKFGVPEMGAVGCGVATAIVNWSMFLMMFHYCYTNKPQKDIGLFNKWFEMPSGKTLLKICKLGLPIGFATFTEVMLFSTSALFLSPLGSQVVASHQTALQTSSMLFMVPLSFGIATTIVLGRVLGQKLVEEAKIISYHALITGVIFAVIAAILIVLFNNIIPLAFTRDPVSIAIASHLLLFAAVYQIPDSLQVVANGILRGYKHTKPVLYVTVFCYWGIGIPFGYVLARTDWIVQPMAAAGFWLIFCVSLSLASGLLIYQIRKIQKIPAATLIAKLERIK.

12 helical membrane passes run 20 to 42, 57 to 79, 96 to 118, 133 to 150, 162 to 184, 194 to 216, 245 to 267, 287 to 306, 318 to 340, 355 to 377, 390 to 412, and 422 to 444; these read VPIFISQLSASGMGLADIVMAGL, IYFPLFLFVLGVLNAITPTVSYL, FWLVWAFVIPLIVVFLNSHWILD, YLAIMAIGIVPALLTVNL, PAMRITFIGLLCNIPLNYIFIFG, VGCGVATAIVNWSMFLMMFHYCY, LGLPIGFATFTEVMLFSTSALFL, MLFMVPLSFGIATTIVLGRV, ISYHALITGVIFAVIAAILIVLF, IAIASHLLLFAAVYQIPDSLQVV, PVLYVTVFCYWGIGIPFGYVLAR, and AAGFWLIFCVSLSLASGLLIYQI.

Belongs to the multi antimicrobial extrusion (MATE) (TC 2.A.66.1) family.

Its subcellular location is the cell inner membrane. Multidrug efflux pump. This is Probable multidrug resistance protein NorM (norM) from Haemophilus ducreyi (strain 35000HP / ATCC 700724).